The primary structure comprises 134 residues: Protein PsiE homolog (134 aa).

A run of 4 helical transmembrane segments spans residues 14–34 (LQWI…IFLI), 56–76 (VESI…IKYF), 82–102 (FPLR…IIVS), and 106–126 (PMET…LYIS).

The protein belongs to the PsiE family.

It localises to the cell membrane. This chain is Protein PsiE homolog, found in Bacillus anthracis.